The sequence spans 448 residues: Bifunctional F420 biosynthesis protein FbiB (448 aa).

The coenzyme F420:L-glutamate ligase stretch occupies residues 1–244 (MTGPEHGSAS…PGANDLFWLG (244 aa)). GTP is bound by residues 20–23 (LPEF), Ser-50, and Lys-55. Asp-109 lines the a divalent metal cation pocket. Asn-112 contributes to the GTP binding site. A divalent metal cation-binding residues include Asp-150 and Thr-151. The tract at residues 245-448 (TAEALELGRQ…VPAADLLILK (204 aa)) is dehydro-coenzyme F420-0 reductase. Residues 260-264 (RRSVR) and Ala-288 each bind FMN. A coenzyme F420-(gamma-Glu)n-binding site is contributed by Asp-320. The FMN site is built by Gly-399 and Arg-436.

This sequence in the N-terminal section; belongs to the CofE family. The cofactor is Mg(2+). It depends on Mn(2+) as a cofactor. K(+) serves as cofactor.

The enzyme catalyses oxidized coenzyme F420-0 + GTP + L-glutamate = oxidized coenzyme F420-1 + GDP + phosphate + H(+). It catalyses the reaction oxidized coenzyme F420-1 + GTP + L-glutamate = oxidized coenzyme F420-2 + GDP + phosphate + H(+). It carries out the reaction oxidized coenzyme F420-(gamma-L-Glu)(n) + GTP + L-glutamate = oxidized coenzyme F420-(gamma-L-Glu)(n+1) + GDP + phosphate + H(+). The catalysed reaction is oxidized coenzyme F420-0 + FMN + H(+) = dehydro coenzyme F420-0 + FMNH2. It participates in cofactor biosynthesis; coenzyme F420 biosynthesis. Its function is as follows. Bifunctional enzyme that catalyzes the GTP-dependent successive addition of multiple gamma-linked L-glutamates to the L-lactyl phosphodiester of 7,8-didemethyl-8-hydroxy-5-deazariboflavin (F420-0) to form polyglutamated F420 derivatives, and the FMNH2-dependent reduction of dehydro-F420-0 to form F420-0. This chain is Bifunctional F420 biosynthesis protein FbiB, found in Mycobacterium tuberculosis (strain ATCC 25177 / H37Ra).